A 1407-amino-acid polypeptide reads, in one-letter code: ABC transporter B family member 6 (1407 aa).

Residues 18-65 (LTPVSEVSEPPESPSPYLDPGAEHGGTGTAAQADDEEEMEEPEEMEPP) form a disordered region. The span at 50 to 63 (ADDEEEMEEPEEME) shows a compositional bias: acidic residues. 4 consecutive transmembrane segments (helical) span residues 84–104 (VLMVFGSVAAAAHGTALIVYL), 139–159 (IVYIAGGVFISGWIEVSCWIL), 212–231 (VGNYIHNMATFISGLIIGFV), and 236–258 (IALITLATGPFIVAAGGISNIFL). An ABC transmembrane type-1 1 domain is found at 86–379 (MVFGSVAAAA…AATNFYSFDQ (294 aa)). N-linked (GlcNAc...) asparagine glycosylation is present at asparagine 291. 2 helical membrane-spanning segments follow: residues 310–330 (GILISLVQGLGLGFTYGLAIC) and 351–371 (GEIITALFAVILSGLGLNQAA). One can recognise an ABC transporter 1 domain in the interval 412–647 (IEFRNVYFSY…GNLYAELLKC (236 aa)). Residue 447–454 (GRNGSGKS) participates in ATP binding. N-linked (GlcNAc...) asparagine glycosylation is found at asparagine 449 and asparagine 663. Disordered regions lie at residues 670–696 (AERDSSAGRGFQEPSSPKMAKSPSLQR) and 709–815 (NSEE…DGQH). A glycan (N-linked (GlcNAc...) asparagine) is linked at asparagine 727. Basic and acidic residues predominate over residues 733–755 (VGEKEPTIKRQDSFEMRLPELPK). Positions 761-770 (PQRQKSNGSD) are enriched in polar residues. Asparagine 767 carries N-linked (GlcNAc...) asparagine glycosylation. Residues 835–1123 (AVLGSIGAAI…PFGLAPYILK (289 aa)) enclose the ABC transmembrane type-1 2 domain. 6 helical membrane passes run 840–860 (IGAAIFGSFNPLLAYVIALVV), 880–900 (LIIACMGIVTVVANFLQHFYF), 958–978 (IFIQDSFAVIVAILIGLLLGW), 982–1002 (LVALATLPVLTLSAIAQKLWL), 1061–1081 (IGFAFGFSQFLLFACNALLLW), and 1102–1122 (MVFSFATFALVEPFGLAPYIL). The ABC transporter 2 domain occupies 1158 to 1395 (IELKNIDFCY…NGLYVRLMQP (238 aa)). Asparagine 1178 is a glycosylation site (N-linked (GlcNAc...) asparagine). 1193-1200 (GVSGSGKS) is an ATP binding site. N-linked (GlcNAc...) asparagine glycans are attached at residues asparagine 1260 and asparagine 1346.

It belongs to the ABC transporter superfamily. ABCB family. Multidrug resistance exporter (TC 3.A.1.201) subfamily. Expressed in aerial tissues.

It localises to the membrane. The enzyme catalyses (indol-3-yl)acetate(in) + ATP + H2O = (indol-3-yl)acetate(out) + ADP + phosphate + H(+). Probable auxin efflux transporter that contributes, together with ABCB20 and in a FKBP42/TWD1-dependent manner, to the regulation of leaf position and morphology, internode distribution, roots development, and inflorescence organization, probably by modulating auxin repartition. The polypeptide is ABC transporter B family member 6 (Arabidopsis thaliana (Mouse-ear cress)).